A 236-amino-acid chain; its full sequence is Phosphoribosylaminoimidazole-succinocarboxamide synthase (236 aa).

It belongs to the SAICAR synthetase family.

The enzyme catalyses 5-amino-1-(5-phospho-D-ribosyl)imidazole-4-carboxylate + L-aspartate + ATP = (2S)-2-[5-amino-1-(5-phospho-beta-D-ribosyl)imidazole-4-carboxamido]succinate + ADP + phosphate + 2 H(+). The protein operates within purine metabolism; IMP biosynthesis via de novo pathway; 5-amino-1-(5-phospho-D-ribosyl)imidazole-4-carboxamide from 5-amino-1-(5-phospho-D-ribosyl)imidazole-4-carboxylate: step 1/2. The protein is Phosphoribosylaminoimidazole-succinocarboxamide synthase of Streptococcus equi subsp. zooepidemicus (strain MGCS10565).